The chain runs to 384 residues: Glucans biosynthesis protein C (384 aa).

The next 10 membrane-spanning stretches (helical) occupy residues 17-37 (AWLMLLGIPFHISLIYSTHSW), 54-74 (FIHAFRMQVFFVISGYFSYML), 91-111 (VGIPMLTAIPLLTLPQFILLQ), 140-160 (LWFLLVLVILTTVSIGIFTWF), 173-193 (AISLAKLSLIFFLLGVAYAAI), 212-232 (FIVMQTLFYVPFFILGALAFI), 240-260 (FTTPSRGCTLGAAVAFIAYLL), 274-294 (TESVITMVMGLWMVNVVFSLG), 311-331 (ASLFIYLVHHPLTLFFGAYIT), and 338-358 (LIGFLCGLIFVMGIALILYEI).

This sequence belongs to the acyltransferase 3 family. OpgC subfamily.

The protein localises to the cell membrane. Its pathway is glycan metabolism; osmoregulated periplasmic glucan (OPG) biosynthesis. In terms of biological role, necessary for the succinyl substitution of periplasmic glucans. Could catalyze the transfer of succinyl residues from the cytoplasmic side of the membrane to the nascent glucan backbones on the periplasmic side of the membrane. The polypeptide is Glucans biosynthesis protein C (Salmonella heidelberg (strain SL476)).